The primary structure comprises 258 residues: MAKRLDLKGVNIYYGSFQAVLDVSLAVLPRSVTAFIGASGCGKTTVLRTLNRMHEVVPGARVEGTVLLDDEDIYAPGIDPVGVRRAIGMVFQRPNPFPAMSIRDNVVAGLKLQGVRNRKVLDDTAEYFLRGTNLWDEVKDRLDKPGGGLSGGQQQRLCIARAIAVQPDVLLMDEPCSSLDPISTMAIEELIGELKQEYTIVIVTHNMQQAARVSDQTAFFNLEAVGRPGRLVEIDDTEKIFSNPTEKATEDYISGRFG.

Positions 5–247 constitute an ABC transporter domain; it reads LDLKGVNIYY…EKIFSNPTEK (243 aa). 37–44 contacts ATP; it reads GASGCGKT.

The protein belongs to the ABC transporter superfamily. Phosphate importer (TC 3.A.1.7) family. As to quaternary structure, the complex is composed of two ATP-binding proteins (PstB), two transmembrane proteins (PstC and PstA) and a solute-binding protein (PstS).

The protein resides in the cell membrane. The enzyme catalyses phosphate(out) + ATP + H2O = ADP + 2 phosphate(in) + H(+). In terms of biological role, part of the ABC transporter complex PstSACB involved in phosphate import. Responsible for energy coupling to the transport system. The protein is Phosphate import ATP-binding protein PstB of Mycobacterium leprae (strain TN).